The primary structure comprises 365 residues: Histidinol-phosphate aminotransferase (365 aa).

Residues 1–21 (MSRPVPNPGILDIAPYTPGKS) are disordered. At Lys-221 the chain carries N6-(pyridoxal phosphate)lysine.

It belongs to the class-II pyridoxal-phosphate-dependent aminotransferase family. Histidinol-phosphate aminotransferase subfamily. As to quaternary structure, homodimer. Requires pyridoxal 5'-phosphate as cofactor.

The catalysed reaction is L-histidinol phosphate + 2-oxoglutarate = 3-(imidazol-4-yl)-2-oxopropyl phosphate + L-glutamate. It functions in the pathway amino-acid biosynthesis; L-histidine biosynthesis; L-histidine from 5-phospho-alpha-D-ribose 1-diphosphate: step 7/9. In Rhodopseudomonas palustris (strain ATCC BAA-98 / CGA009), this protein is Histidinol-phosphate aminotransferase.